A 95-amino-acid chain; its full sequence is Large ribosomal subunit protein uL23 (95 aa).

It belongs to the universal ribosomal protein uL23 family. In terms of assembly, part of the 50S ribosomal subunit. Contacts protein L29, and trigger factor when it is bound to the ribosome.

In terms of biological role, one of the early assembly proteins it binds 23S rRNA. One of the proteins that surrounds the polypeptide exit tunnel on the outside of the ribosome. Forms the main docking site for trigger factor binding to the ribosome. The chain is Large ribosomal subunit protein uL23 from Anoxybacillus flavithermus (strain DSM 21510 / WK1).